The chain runs to 409 residues: Elongation factor Tu, plastid (409 aa).

The tr-type G domain maps to 10 to 214; it reads KPHINIGTIG…KIDSYIPTPI (205 aa). The interval 19–26 is G1; that stretch reads GHVDHGKT. Residue 19–26 participates in GTP binding; that stretch reads GHVDHGKT. Thr26 provides a ligand contact to Mg(2+). The interval 60 to 64 is G2; it reads GITIN. The G3 stretch occupies residues 81 to 84; it reads DCPG. GTP contacts are provided by residues 81-85 and 136-139; these read DCPGH and NKED. The tract at residues 136 to 139 is G4; sequence NKED. Residues 174–176 are G5; the sequence is SAL.

It belongs to the TRAFAC class translation factor GTPase superfamily. Classic translation factor GTPase family. EF-Tu/EF-1A subfamily.

Its subcellular location is the plastid. The enzyme catalyses GTP + H2O = GDP + phosphate + H(+). In terms of biological role, GTP hydrolase that promotes the GTP-dependent binding of aminoacyl-tRNA to the A-site of ribosomes during protein biosynthesis. The sequence is that of Elongation factor Tu, plastid (tufA) from Euglena longa (Euglenophycean alga).